We begin with the raw amino-acid sequence, 122 residues long: Putative iron-sulfur cluster insertion protein ErpA (122 aa).

Iron-sulfur cluster contacts are provided by C50, C114, and C116.

Belongs to the HesB/IscA family. As to quaternary structure, homodimer. It depends on iron-sulfur cluster as a cofactor.

Its function is as follows. Required for insertion of 4Fe-4S clusters. The polypeptide is Putative iron-sulfur cluster insertion protein ErpA (Cupriavidus necator (strain ATCC 17699 / DSM 428 / KCTC 22496 / NCIMB 10442 / H16 / Stanier 337) (Ralstonia eutropha)).